We begin with the raw amino-acid sequence, 366 residues long: Galactose-1-phosphate uridylyltransferase (366 aa).

Phosphoserine is present on Ser-27. The Zn(2+) site is built by Cys-54 and Cys-57. UDP-alpha-D-glucose is bound by residues Ala-63 and 79–80 (ND). Zn(2+) is bound at residue His-124. Asn-169 lines the UDP-alpha-D-glucose pocket. A Zn(2+)-binding site is contributed by His-180. His-182 (tele-UMP-histidine intermediate) is an active-site residue. Gln-184 provides a ligand contact to UDP-alpha-D-glucose. Residues Glu-198, His-297, His-314, and His-316 each coordinate Fe cation. UDP-alpha-D-glucose-binding positions include 329 to 332 (KFLV) and 334 to 335 (FE).

This sequence belongs to the galactose-1-phosphate uridylyltransferase type 1 family. In terms of assembly, homodimer. Zn(2+) is required as a cofactor.

It catalyses the reaction alpha-D-galactose 1-phosphate + UDP-alpha-D-glucose = alpha-D-glucose 1-phosphate + UDP-alpha-D-galactose. The protein operates within carbohydrate metabolism; galactose metabolism. The chain is Galactose-1-phosphate uridylyltransferase (GAL7) from Saccharomyces cerevisiae (strain ATCC 204508 / S288c) (Baker's yeast).